The sequence spans 274 residues: Lipoprotein E (274 aa).

The first 20 residues, 1-20 (MKTTLKMTALAALSAFVLAG), serve as a signal peptide directing secretion. C21 carries N-palmitoyl cysteine lipidation. C21 carries the S-diacylglycerol cysteine lipid modification.

The protein localises to the cell outer membrane. This chain is Lipoprotein E (hel), found in Haemophilus influenzae (strain ATCC 51907 / DSM 11121 / KW20 / Rd).